We begin with the raw amino-acid sequence, 696 residues long: DNA ligase (696 aa).

Residues 36–40, 85–86, and Glu-124 contribute to the NAD(+) site; these read DAVYD and SL. Lys-126 (N6-AMP-lysine intermediate) is an active-site residue. Residues Arg-147, Glu-184, Lys-308, and Lys-332 each contribute to the NAD(+) site. Zn(2+)-binding residues include Cys-426, Cys-429, Cys-444, and Cys-449. Positions 618-696 constitute a BRCT domain; it reads QRTVSLQGQT…EEELLKLLAS (79 aa).

The protein belongs to the NAD-dependent DNA ligase family. LigA subfamily. The cofactor is Mg(2+). Mn(2+) is required as a cofactor.

The enzyme catalyses NAD(+) + (deoxyribonucleotide)n-3'-hydroxyl + 5'-phospho-(deoxyribonucleotide)m = (deoxyribonucleotide)n+m + AMP + beta-nicotinamide D-nucleotide.. In terms of biological role, DNA ligase that catalyzes the formation of phosphodiester linkages between 5'-phosphoryl and 3'-hydroxyl groups in double-stranded DNA using NAD as a coenzyme and as the energy source for the reaction. It is essential for DNA replication and repair of damaged DNA. The sequence is that of DNA ligase from Prochlorococcus marinus (strain MIT 9303).